The sequence spans 530 residues: BTB/POZ domain-containing protein 3 (530 aa).

Residues 23–48 (KNRSKKGSKKANSSGGGGGGGSVGSG) are disordered. The span at 36–46 (SGGGGGGGSVG) shows a compositional bias: gly residues. One can recognise a BTB domain in the interval 128-198 (ADVHFVVGPP…IYCDEIDLAA (71 aa)). The BACK domain maps to 243 to 308 (FEEPDLTQRC…NWAEVECQRQ (66 aa)).

In the somatosensory cortex, specifically expressed in spiny stellate neurons during barrel formation. Also expressed in the olfactory bulb, piriform cortex and hippocampus.

It is found in the cytoplasm. It localises to the cytosol. The protein resides in the nucleus. Functionally, acts as a key regulator of dendritic field orientation during development of sensory cortex. Also directs dendrites toward active axon terminals when ectopically expressed. The protein is BTB/POZ domain-containing protein 3 (Btbd3) of Mus musculus (Mouse).